The chain runs to 82 residues: Cytochrome b559 subunit alpha (82 aa).

A helical membrane pass occupies residues V21–W35. Residue H23 coordinates heme.

The protein belongs to the PsbE/PsbF family. Heterodimer of an alpha subunit and a beta subunit. PSII is composed of 1 copy each of membrane proteins PsbA, PsbB, PsbC, PsbD, PsbE, PsbF, PsbH, PsbI, PsbJ, PsbK, PsbL, PsbM, PsbT, PsbX, PsbY, PsbZ, Psb30/Ycf12, at least 3 peripheral proteins of the oxygen-evolving complex and a large number of cofactors. It forms dimeric complexes. The cofactor is heme b.

The protein localises to the plastid. It is found in the chloroplast thylakoid membrane. Functionally, this b-type cytochrome is tightly associated with the reaction center of photosystem II (PSII). PSII is a light-driven water:plastoquinone oxidoreductase that uses light energy to abstract electrons from H(2)O, generating O(2) and a proton gradient subsequently used for ATP formation. It consists of a core antenna complex that captures photons, and an electron transfer chain that converts photonic excitation into a charge separation. This is Cytochrome b559 subunit alpha from Chlamydomonas reinhardtii (Chlamydomonas smithii).